The primary structure comprises 785 residues: Probable ATP-dependent RNA helicase ddx17 (785 aa).

4 stretches are compositionally biased toward low complexity: residues 1-11, 18-37, 49-95, and 105-177; these read MSYNSSNSGSG, SGNS…GNRS, SYNR…YGPS, and GSSS…NGYS. A disordered region spans residues 1–233; sequence MSYNSSNSGS…TPSTSYNGGS (233 aa). The segment covering 178-191 has biased composition (polar residues); the sequence is KPTSNYSYSNGYTG. Positions 192–233 are enriched in low complexity; that stretch reads PTTNYSSYSNGYSTPPTSTSTSSSSTTTTTTTTPSTSYNGGS. The short motif at 384–412 is the Q motif element; sequence MQFTQAPFPGYLMKEIIGAGFPNPTPIQS. A Helicase ATP-binding domain is found at 415–590; sequence WPIALKGRDI…HDFLTDHIQV (176 aa). Residue 428 to 435 coordinates ATP; sequence AKTGSGKT. The DEAD box signature appears at 538–541; that stretch reads DEAD. Residues 602 to 763 form the Helicase C-terminal domain; sequence NVRQIVEVCQ…KIPIELSNLS (162 aa). A compositionally biased stretch (polar residues) spans 764 to 774; it reads VTPSTSSNTKK. A disordered region spans residues 764–785; the sequence is VTPSTSSNTKKFSPYPTYSKRY.

This sequence belongs to the DEAD box helicase family. DDX5/DBP2 subfamily.

The protein resides in the cytoplasm. It localises to the nucleus. It catalyses the reaction ATP + H2O = ADP + phosphate + H(+). Its function is as follows. Probable ATP-dependent RNA helicase which may be involved nonsense-mediated mRNA decay and ribosome biogenesis through rRNA processing. The polypeptide is Probable ATP-dependent RNA helicase ddx17 (ddx17) (Dictyostelium discoideum (Social amoeba)).